The chain runs to 180 residues: Shikimate kinase (180 aa).

Gly19 to Thr24 is an ATP binding site. Residue Thr23 coordinates Mg(2+). 3 residues coordinate substrate: Asp41, Arg65, and Gly87. Residue Arg125 participates in ATP binding. Substrate is bound at residue Arg144.

This sequence belongs to the shikimate kinase family. In terms of assembly, monomer. It depends on Mg(2+) as a cofactor.

The protein localises to the cytoplasm. It catalyses the reaction shikimate + ATP = 3-phosphoshikimate + ADP + H(+). Its pathway is metabolic intermediate biosynthesis; chorismate biosynthesis; chorismate from D-erythrose 4-phosphate and phosphoenolpyruvate: step 5/7. In terms of biological role, catalyzes the specific phosphorylation of the 3-hydroxyl group of shikimic acid using ATP as a cosubstrate. The protein is Shikimate kinase of Acinetobacter baylyi (strain ATCC 33305 / BD413 / ADP1).